The following is a 185-amino-acid chain: Elongation factor P (185 aa).

This sequence belongs to the elongation factor P family.

The protein resides in the cytoplasm. The protein operates within protein biosynthesis; polypeptide chain elongation. Its function is as follows. Involved in peptide bond synthesis. Stimulates efficient translation and peptide-bond synthesis on native or reconstituted 70S ribosomes in vitro. Probably functions indirectly by altering the affinity of the ribosome for aminoacyl-tRNA, thus increasing their reactivity as acceptors for peptidyl transferase. The protein is Elongation factor P of Clostridioides difficile (strain 630) (Peptoclostridium difficile).